Consider the following 185-residue polypeptide: Small ribosomal subunit protein bS6 (185 aa).

Basic and acidic residues predominate over residues 115–141 (AAQKAAAEKAEAARLEAEKAAEEEAAK). The tract at residues 115–185 (AAQKAAAEKA…EEPKSDEEDA (71 aa)) is disordered. Over residues 142–169 (AAEAQAKEAPAAEAPAEEAPAAEAPAEA) the composition is skewed to low complexity. Positions 170–185 (PAEEPAEEPKSDEEDA) are enriched in acidic residues.

The protein belongs to the bacterial ribosomal protein bS6 family.

Functionally, binds together with bS18 to 16S ribosomal RNA. The chain is Small ribosomal subunit protein bS6 from Desulfatibacillum aliphaticivorans.